Here is a 164-residue protein sequence, read N- to C-terminus: tRNA (cytidine(34)-2'-O)-methyltransferase (164 aa).

Residues Met-80, Gly-102, Val-124, and Ser-132 each coordinate S-adenosyl-L-methionine.

It belongs to the class IV-like SAM-binding methyltransferase superfamily. RNA methyltransferase TrmH family. TrmL subfamily. In terms of assembly, homodimer.

Its subcellular location is the cytoplasm. The enzyme catalyses cytidine(34) in tRNA + S-adenosyl-L-methionine = 2'-O-methylcytidine(34) in tRNA + S-adenosyl-L-homocysteine + H(+). The catalysed reaction is 5-carboxymethylaminomethyluridine(34) in tRNA(Leu) + S-adenosyl-L-methionine = 5-carboxymethylaminomethyl-2'-O-methyluridine(34) in tRNA(Leu) + S-adenosyl-L-homocysteine + H(+). Its function is as follows. Methylates the ribose at the nucleotide 34 wobble position in the two leucyl isoacceptors tRNA(Leu)(CmAA) and tRNA(Leu)(cmnm5UmAA). Catalyzes the methyl transfer from S-adenosyl-L-methionine to the 2'-OH of the wobble nucleotide. This chain is tRNA (cytidine(34)-2'-O)-methyltransferase, found in Polaromonas sp. (strain JS666 / ATCC BAA-500).